Consider the following 782-residue polypeptide: Host cell factor homolog hcf-1 (782 aa).

The tract at residues 1-25 is disordered; it reads MDEDVGLEATNYSRGDESRSEEQEK. Residues 14-25 are compositionally biased toward basic and acidic residues; it reads RGDESRSEEQEK. Kelch repeat units follow at residues 55–103, 105–151, 161–222, 227–271, and 280–324; these read LIVI…SLGN, IYRF…RIGH, KAYV…IYEK, RMVV…PRSL, and KMFV…VPLH. 3 positions are modified to phosphoserine: Ser-423, Ser-431, and Ser-449. The segment covering 423-434 has biased composition (polar residues); it reads SPIKRATTSPRK. The disordered stretch occupies residues 423–553; sequence SPIKRATTSP…EENGDDDLPW (131 aa). Composition is skewed to polar residues over residues 456–469 and 496–513; these read TAPS…TTYT and TASP…SSTC. Ser-498 is modified (phosphoserine). Residues 537–552 show a composition bias toward acidic residues; that stretch reads GETDEMKEENGDDDLP.

As to quaternary structure, interacts with daf-16/FOXO. Interacts with deacetylase sir-2.1. Interacts with the 14-3-3 family proteins ftt-2 and par-5. In terms of processing, phosphorylated at multiple serine residues. Phosphorylation is developmentally regulated, occurring in embryos but not L1 larvae. Phosphorylation may be cell-cycle-regulated.

Its subcellular location is the nucleus. Transcriptional coregulator. Involved in control of the cell cycle and in modulating mitotic histone phosphorylation. Plays a role in modulating lifespan by regulating the transcriptional activity of daf-16/Forkhead box protein O, in concert with protein deacetylase sir-2.1/SIRT1, and perhaps acting independently of the Insulin/IGF-1-like signaling (IIS) mediated pathway. Negatively modulates responses to environmental stresses, including oxidative stress, heat stress, and exposure to heavy metals; acting via regulation of the transcription factors daf-16 and skn-1. May play a role in pharyngeal development via positive modulation of expression of sup-35. This Caenorhabditis elegans protein is Host cell factor homolog hcf-1.